Here is a 279-residue protein sequence, read N- to C-terminus: MDFDDHDDGDEEMPPMPVSSSYETPPQHGLAGGGMAPKPPGEIGSRVKGPSCGGGRYRECLKNHAVGIGGHAVDGCGEFMAAGEEGTIDALRCAACNCHRNFHRKESESLAGEGSPFSPAAVVPYGATPHHQFSPYYRTPAGYLHHHQHHMAAAAAAAAAAAGGYPQRPLALPSTSHSGRDDGDDLSGMVGPMSAVGPLSGMSLGAGPSGSGSGKKRFRTKFTQEQKDKMLAFAERVGWRIQKHDEAAVQQFCDEVGVKRHVLKVWMHNNKHTLGKKLP.

Acidic residues predominate over residues 1 to 13 (MDFDDHDDGDEEM). Residues 1-47 (MDFDDHDDGDEEMPPMPVSSSYETPPQHGLAGGGMAPKPPGEIGSRV) form a disordered region. A ZF-HD dimerization-type; degenerate zinc finger spans residues 57-106 (YRECLKNHAVGIGGHAVDGCGEFMAAGEEGTIDALRCAACNCHRNFHRKE). The disordered stretch occupies residues 168–190 (RPLALPSTSHSGRDDGDDLSGMV). Positions 215–278 (KKRFRTKFTQ…NNKHTLGKKL (64 aa)) form a DNA-binding region, homeobox.

Homo- and heterodimer with other ZFHD proteins.

The protein resides in the nucleus. Functionally, putative transcription factor. In Oryza sativa subsp. japonica (Rice), this protein is Zinc-finger homeodomain protein 1 (ZHD1).